The chain runs to 420 residues: RING finger protein 39 (420 aa).

Residues cysteine 88–glycine 135 form an RING-type zinc finger. Disordered stretches follow at residues proline 166–proline 186 and aspartate 246–lysine 265. The 211-residue stretch at aspartate 210–serine 420 folds into the B30.2/SPRY domain.

The protein resides in the cytoplasm. It carries out the reaction S-ubiquitinyl-[E2 ubiquitin-conjugating enzyme]-L-cysteine + [acceptor protein]-L-lysine = [E2 ubiquitin-conjugating enzyme]-L-cysteine + N(6)-ubiquitinyl-[acceptor protein]-L-lysine.. Its pathway is protein modification; protein ubiquitination. Its function is as follows. Plays an inhibitory role in anti-RNA viral innate immunity by targeting the adapter DDX3X and promoting its 'Lys-48'-linked polyubiquitination. Alternatively, enhances the cGAS-STING pathway activation by promoting 'Lys-63'-linked ubiquitination of STING1, facilitating the STING1-TBK1 complex formation and STING1 activation. The polypeptide is RING finger protein 39 (RNF39) (Macaca mulatta (Rhesus macaque)).